A 502-amino-acid chain; its full sequence is Archaemetzincin-1 (502 aa).

Residue His-262 participates in Zn(2+) binding. Catalysis depends on Glu-263, which acts as the Proton acceptor. 5 residues coordinate Zn(2+): His-266, Cys-273, Cys-278, Cys-297, and Cys-300. A disordered region spans residues 336–383; the sequence is GEPSVSEDTLPFSADSGMGCESDTEPVTSPSEPVTPDGWSHPFPDGPE.

This sequence belongs to the peptidase M54 family. It depends on Zn(2+) as a cofactor.

Functionally, probable zinc metalloprotease. This is Archaemetzincin-1 (Amz1) from Mus musculus (Mouse).